The following is a 303-amino-acid chain: Probable cell division protein WhiA (303 aa).

The segment at residues 272 to 303 (SLQQIADSLDFAITKSGVNHRLRKINKLAEDL) is a DNA-binding region (H-T-H motif).

Belongs to the WhiA family.

Involved in cell division and chromosome segregation. This Streptococcus equi subsp. zooepidemicus (strain MGCS10565) protein is Probable cell division protein WhiA.